Consider the following 215-residue polypeptide: NADH-quinone oxidoreductase subunit C (215 aa).

The protein belongs to the complex I 30 kDa subunit family. In terms of assembly, NDH-1 is composed of 14 different subunits. Subunits NuoB, C, D, E, F, and G constitute the peripheral sector of the complex.

The protein resides in the cell inner membrane. It carries out the reaction a quinone + NADH + 5 H(+)(in) = a quinol + NAD(+) + 4 H(+)(out). Its function is as follows. NDH-1 shuttles electrons from NADH, via FMN and iron-sulfur (Fe-S) centers, to quinones in the respiratory chain. The immediate electron acceptor for the enzyme in this species is believed to be ubiquinone. Couples the redox reaction to proton translocation (for every two electrons transferred, four hydrogen ions are translocated across the cytoplasmic membrane), and thus conserves the redox energy in a proton gradient. This Methylobacterium sp. (strain 4-46) protein is NADH-quinone oxidoreductase subunit C.